Here is a 186-residue protein sequence, read N- to C-terminus: Large ribosomal subunit protein uL5 (186 aa).

This sequence belongs to the universal ribosomal protein uL5 family. Part of the 50S ribosomal subunit; part of the 5S rRNA/L5/L18/L25 subcomplex. Contacts the 5S rRNA and the P site tRNA. Forms a bridge to the 30S subunit in the 70S ribosome.

This is one of the proteins that bind and probably mediate the attachment of the 5S RNA into the large ribosomal subunit, where it forms part of the central protuberance. In the 70S ribosome it contacts protein S13 of the 30S subunit (bridge B1b), connecting the 2 subunits; this bridge is implicated in subunit movement. Contacts the P site tRNA; the 5S rRNA and some of its associated proteins might help stabilize positioning of ribosome-bound tRNAs. The sequence is that of Large ribosomal subunit protein uL5 from Legionella pneumophila subsp. pneumophila (strain Philadelphia 1 / ATCC 33152 / DSM 7513).